The chain runs to 208 residues: Platelet glycoprotein Ib beta chain (208 aa).

The N-terminal stretch at 1–26 (MGSGPRGAVSLLLLMLAPPSCPAADC) is a signal peptide. Cystine bridges form between C26/C32 and C30/C39. Positions 27–55 (PAPCSCAGTLVDCGRRGLTWASLPTSFPV) constitute an LRRNT domain. At 27 to 147 (PAPCSCAGTL…RAACAPGPLC (121 aa)) the chain is on the extracellular side. The LRR repeat unit spans residues 60–83 (LVLTGNNLTALPSGLLDALPAVRT). N-linked (GlcNAc...) asparagine glycosylation is present at N66. The 55-residue stretch at 89 to 143 (NPWRCDCRLVPLRAWLAGRPERAPYRDLRCVAPPAVRGRLLPYLAEDDVRAACAP) folds into the LRRCT domain. Disulfide bonds link C93-C118 and C95-C141. A helical membrane pass occupies residues 148 to 172 (WGALAAELALLGLGLLHALLLVLLL). Over 173–208 (CRLRRLRARARARARAALRLSLTDPLVAEQDGTDES) the chain is Cytoplasmic. Position 193 is a phosphoserine; by PKA (S193). The residue at position 195 (T195) is a Phosphothreonine.

As to quaternary structure, two GP-Ib beta are disulfide-linked to one GP-Ib alpha. GP-IX is complexed with the GP-Ib heterodimer via a non covalent linkage. Interacts with TRAF4.

The protein localises to the membrane. In terms of biological role, gp-Ib, a surface membrane protein of platelets, participates in the formation of platelet plugs by binding to von Willebrand factor, which is already bound to the subendothelium. The protein is Platelet glycoprotein Ib beta chain (GP1BB) of Papio cynocephalus (Yellow baboon).